The following is a 279-amino-acid chain: MADS-box transcription factor PHERES 1 (279 aa).

In terms of domain architecture, MADS-box spans 1–60 (MRGKMKLSFIENDSVRKTTFTKRKKGMLKKFNELVTLCGVDACAVIRSPYNSIQEPWPSR).

As to quaternary structure, interacts with AGL61/DIANA and AGL62. Male gametophyte, embryo and endosperm.

The protein localises to the nucleus. Functionally, probable transcription factor involved in the development of gametophytes and seeds. This is MADS-box transcription factor PHERES 1 (PHE1) from Arabidopsis thaliana (Mouse-ear cress).